Here is a 542-residue protein sequence, read N- to C-terminus: Putative cysteine ligase BshC (542 aa).

Positions 458–479 (LTKNATLLQAQIDFLHQTLQRA) form a coiled coil.

It belongs to the BshC family.

Its function is as follows. Involved in bacillithiol (BSH) biosynthesis. May catalyze the last step of the pathway, the addition of cysteine to glucosamine malate (GlcN-Mal) to generate BSH. The protein is Putative cysteine ligase BshC of Geobacillus sp. (strain WCH70).